The chain runs to 153 residues: S-ribosylhomocysteine lyase (153 aa).

His57, His61, and Cys124 together coordinate Fe cation.

Belongs to the LuxS family. Homodimer. Fe cation is required as a cofactor.

The catalysed reaction is S-(5-deoxy-D-ribos-5-yl)-L-homocysteine = (S)-4,5-dihydroxypentane-2,3-dione + L-homocysteine. Functionally, involved in the synthesis of autoinducer 2 (AI-2) which is secreted by bacteria and is used to communicate both the cell density and the metabolic potential of the environment. The regulation of gene expression in response to changes in cell density is called quorum sensing. Catalyzes the transformation of S-ribosylhomocysteine (RHC) to homocysteine (HC) and 4,5-dihydroxy-2,3-pentadione (DPD). In Oceanobacillus iheyensis (strain DSM 14371 / CIP 107618 / JCM 11309 / KCTC 3954 / HTE831), this protein is S-ribosylhomocysteine lyase.